Here is a 122-residue protein sequence, read N- to C-terminus: S-adenosylmethionine decarboxylase proenzyme (122 aa).

Serine 63 acts as the Schiff-base intermediate with substrate; via pyruvic acid in catalysis. At serine 63 the chain carries Pyruvic acid (Ser); by autocatalysis. Histidine 68 functions as the Proton acceptor; for processing activity in the catalytic mechanism. Residue cysteine 83 is the Proton donor; for catalytic activity of the active site.

This sequence belongs to the prokaryotic AdoMetDC family. Type 1 subfamily. In terms of assembly, heterotetramer of two alpha and two beta chains arranged as a dimer of alpha/beta heterodimers. Pyruvate serves as cofactor. Post-translationally, is synthesized initially as an inactive proenzyme. Formation of the active enzyme involves a self-maturation process in which the active site pyruvoyl group is generated from an internal serine residue via an autocatalytic post-translational modification. Two non-identical subunits are generated from the proenzyme in this reaction, and the pyruvate is formed at the N-terminus of the alpha chain, which is derived from the carboxyl end of the proenzyme. The post-translation cleavage follows an unusual pathway, termed non-hydrolytic serinolysis, in which the side chain hydroxyl group of the serine supplies its oxygen atom to form the C-terminus of the beta chain, while the remainder of the serine residue undergoes an oxidative deamination to produce ammonia and the pyruvoyl group blocking the N-terminus of the alpha chain.

It catalyses the reaction S-adenosyl-L-methionine + H(+) = S-adenosyl 3-(methylsulfanyl)propylamine + CO2. The protein operates within amine and polyamine biosynthesis; S-adenosylmethioninamine biosynthesis; S-adenosylmethioninamine from S-adenosyl-L-methionine: step 1/1. Its function is as follows. Catalyzes the decarboxylation of S-adenosylmethionine to S-adenosylmethioninamine (dcAdoMet), the propylamine donor required for the synthesis of the polyamines spermine and spermidine from the diamine putrescine. The protein is S-adenosylmethionine decarboxylase proenzyme of Methanococcus maripaludis (strain C5 / ATCC BAA-1333).